We begin with the raw amino-acid sequence, 121 residues long: Acidic phospholipase A2 PLA-2 (121 aa).

Disulfide bonds link cysteine 26–cysteine 115, cysteine 28–cysteine 44, cysteine 43–cysteine 95, cysteine 49–cysteine 121, cysteine 50–cysteine 88, cysteine 57–cysteine 81, and cysteine 75–cysteine 86. Tyrosine 27, glycine 29, and glycine 31 together coordinate Ca(2+). The active site involves histidine 47. Aspartate 48 provides a ligand contact to Ca(2+). Aspartate 89 is a catalytic residue.

It belongs to the phospholipase A2 family. Group II subfamily. D49 sub-subfamily. Requires Ca(2+) as cofactor. Expressed by the venom gland.

Its subcellular location is the secreted. It carries out the reaction a 1,2-diacyl-sn-glycero-3-phosphocholine + H2O = a 1-acyl-sn-glycero-3-phosphocholine + a fatty acid + H(+). Its function is as follows. PLA2 catalyzes the calcium-dependent hydrolysis of the 2-acyl groups in 3-sn-phosphoglycerides. This Eristicophis macmahoni (Leaf-nosed viper) protein is Acidic phospholipase A2 PLA-2.